Consider the following 389-residue polypeptide: S-adenosylmethionine synthase (389 aa).

His16 contributes to the ATP binding site. Asp18 provides a ligand contact to Mg(2+). Glu44 contacts K(+). The L-methionine site is built by Glu57 and Gln100. Positions 100–110 are flexible loop; that stretch reads QSPDIAQGVDE. Residues 167-169, 233-234, Asp242, 248-249, Ala265, and Lys269 each bind ATP; these read DAK, RF, and RK. Position 242 (Asp242) interacts with L-methionine. Residue Lys273 coordinates L-methionine.

The protein belongs to the AdoMet synthase family. In terms of assembly, homotetramer; dimer of dimers. It depends on Mg(2+) as a cofactor. Requires K(+) as cofactor.

The protein localises to the cytoplasm. It catalyses the reaction L-methionine + ATP + H2O = S-adenosyl-L-methionine + phosphate + diphosphate. Its pathway is amino-acid biosynthesis; S-adenosyl-L-methionine biosynthesis; S-adenosyl-L-methionine from L-methionine: step 1/1. Catalyzes the formation of S-adenosylmethionine (AdoMet) from methionine and ATP. The overall synthetic reaction is composed of two sequential steps, AdoMet formation and the subsequent tripolyphosphate hydrolysis which occurs prior to release of AdoMet from the enzyme. The protein is S-adenosylmethionine synthase of Acidithiobacillus ferrooxidans (strain ATCC 23270 / DSM 14882 / CIP 104768 / NCIMB 8455) (Ferrobacillus ferrooxidans (strain ATCC 23270)).